Reading from the N-terminus, the 410-residue chain is Translation initiation factor 2 subunit gamma (410 aa).

The region spanning 9–202 is the tr-type G domain; sequence QAEVNIGMVG…AIEEFIPTPE (194 aa). The G1 stretch occupies residues 18–25; sequence GHVDHGKT. Mg(2+)-binding residues include D21, T25, G46, and T48. GTP is bound at residue 21–26; the sequence is DHGKTT. Residues 46–50 are G2; it reads GITIK. Zn(2+) contacts are provided by C61, C64, C73, and C76. The tract at residues 90–93 is G3; the sequence is DAPG. GTP-binding positions include 145-148 and 180-182; these read NKIE and SAL. The tract at residues 145–148 is G4; sequence NKIE. The interval 180-182 is G5; it reads SAL.

Belongs to the TRAFAC class translation factor GTPase superfamily. Classic translation factor GTPase family. EIF2G subfamily. In terms of assembly, heterotrimer composed of an alpha, a beta and a gamma chain. Mg(2+) is required as a cofactor.

It catalyses the reaction GTP + H2O = GDP + phosphate + H(+). EIF-2 functions in the early steps of protein synthesis by forming a ternary complex with GTP and initiator tRNA. The polypeptide is Translation initiation factor 2 subunit gamma (Thermococcus onnurineus (strain NA1)).